Reading from the N-terminus, the 205-residue chain is Probable DNA-binding protein (205 aa).

The tract at residues Gly140–Gly168 is disordered.

This is Probable DNA-binding protein from Homo sapiens (Human).